The chain runs to 681 residues: MAMASAMDLSSPPTFFLSGTSTSSPSLRRLSSISVSGFRRHSNRKLQILCQATAGTEPQSGLSVSGSKLAARSGQDRLLKVPISNIRNFSIIAHIDHGKSTLADKLLQVTGTVQNRDMKEQFLDNMDLERERGITIKLQAARMRYVYEDTPFCLNLIDTPGHVDFSYEVSRSLAACEGALLVVDASQGVEAQTLANVYLALENNLEIIPVLNKIDLPGAEPEKVLREIEEVIGLDCSKAIFCSAKEGIGITEILDAIVQRIPAPLDTAGKPLRALIFDSYYDPYRGVIVYFRVIDGKVKKGDRIFFMASGKDYFADEVGVLSPNQIQVDELYAGEVGYIAASVRSVADARVGDTITHYSRKAESSLPGYEEATPMVFCGLFPVDADQFPDLRDALEKLQLNDAALKFEPETSSAMGFGFRCGFLGLLHMEIVQERLEREYNLNLITTAPSVVYRVNSVNGDTTLCSNPSRLPDPGQRKSVEEPYVKIELLTPKDYIGALMELAQERRGEFKEMKYIAENRASILYELPLAEMVGDFFDQLKSRTKGYASMEYSVIGYRESDLIKLDILINAEMVEPLSTIVHRDKAYSVGRALTQKLKELIPRQMFKVPIQACIGSKVIASEALSAIRKDVLAKCYGGDISRKKKLLKKQAAGKKRMKAIGRVDVPQEAFMAVLKLEREVL.

The N-terminal 51 residues, 1–51, are a transit peptide targeting the chloroplast; it reads MAMASAMDLSSPPTFFLSGTSTSSPSLRRLSSISVSGFRRHSNRKLQILCQ. A tr-type G domain is found at 84–265; it reads SNIRNFSIIA…AIVQRIPAPL (182 aa). GTP-binding positions include 93-100, 158-162, and 212-215; these read AHIDHGKS, DTPGH, and NKID.

This sequence belongs to the TRAFAC class translation factor GTPase superfamily. Classic translation factor GTPase family. LepA subfamily.

The protein localises to the plastid. Its subcellular location is the chloroplast. The enzyme catalyses GTP + H2O = GDP + phosphate + H(+). Promotes chloroplast protein synthesis. May act as a fidelity factor of the translation reaction, by catalyzing a one-codon backward translocation of tRNAs on improperly translocated ribosomes. The polypeptide is Translation factor GUF1 homolog, chloroplastic (Arabidopsis thaliana (Mouse-ear cress)).